A 114-amino-acid polypeptide reads, in one-letter code: uncharacterized protein (114 aa).

The stretch at 31–72 (EFEKLVSEQMKTMDKLLDLQSELDRCKQIEAELRHLERDARL) forms a coiled coil.

This is an uncharacterized protein from Bacillus subtilis (strain 168).